The chain runs to 298 residues: Enoyl-CoA hydratase ACTT6 (298 aa).

It belongs to the enoyl-CoA hydratase/isomerase family.

Its pathway is mycotoxin biosynthesis. Functionally, enoyl-CoA hydratase; part of the gene clusters that mediate the biosynthesis of the host-selective toxins (HSTs) ACT-toxins responsible for brown spot of tangerine disease by the tangerine pathotype which affects tangerines and mandarins. ACT-toxins consist of three moieties, 9,10-epoxy-8-hydroxy-9-methyl-decatrienoic acid (EDA), valine and a polyketide. ACT-toxin I is toxic to both citrus and pear; toxin II the 5''-deoxy derivative of ACT-toxin I, is highly toxic to pear and slightly toxic to citrus. On cellular level, ACT-toxins affect plasma membrane of susceptible cells and cause a sudden increase in loss of K(+) after a few minutes of toxin treatment. The acyl-CoA ligase ACTT1, the hydrolase ACTT2, the enoyl-CoA hydratases ACTT3 and ACTT6, and the acyl-CoA synthetase ACTT5 are all involved in the biosynthesis of the AK-, AF- and ACT-toxin common 9,10-epoxy-8-hydroxy-9-methyl-decatrienoic acid (EDA) structural moiety. The exact role of each enzyme, and of additional enzymes identified within the AF-toxin clusters have still to be determined. On the other hand, ACTTS1 to ACTTS4 are specific to the tangerine pathotype. The function of ACTTS3 is to elongate the polyketide chain portion of ACT-toxin that is unique to this toxin. The enoyl-reductase ACTTS2 might complement the missing enoyl-reductase (ER) domain in ACTTS3 in the synthesis of the polyketide portion of ACT-toxin. The roles of the nonribosomal peptide synthetases-related proteins ACTTS1 and ACTTS4 have also still not been elucidated. The sequence is that of Enoyl-CoA hydratase ACTT6 from Alternaria alternata (Alternaria rot fungus).